The chain runs to 249 residues: (2S)-[(R)-hydroxy(phenyl)methyl]succinyl-CoA dehydrogenase subunit BbsC (249 aa).

This sequence belongs to the short-chain dehydrogenases/reductases (SDR) family. In terms of assembly, heterotetramer composed of 2 inactive BbsC subunits and 2 active BbsD subunits.

Its pathway is xenobiotic degradation; toluene degradation. Functionally, involved in an anaerobic toluene degradation pathway. Catalytically inactive subunit, which is probably required for the structural and/or regulatory integrity of the catalytic subunit BbsD. This subunit cannot bind NAD(+) or substrate. This is (2S)-[(R)-hydroxy(phenyl)methyl]succinyl-CoA dehydrogenase subunit BbsC from Thauera aromatica.